A 346-amino-acid chain; its full sequence is Acetylserotonin O-methyltransferase (346 aa).

S-adenosyl-L-methionine-binding positions include Y148, W165, D211, 236 to 238 (GDF), and K253. The Proton donor/acceptor role is filled by H256. Residues D257, N303, and Q307 each coordinate substrate.

This sequence belongs to the class I-like SAM-binding methyltransferase superfamily. Cation-independent O-methyltransferase family. In terms of assembly, homodimer. Expressed in pineal gland and retina.

It carries out the reaction N-acetylserotonin + S-adenosyl-L-methionine = melatonin + S-adenosyl-L-homocysteine + H(+). It functions in the pathway aromatic compound metabolism; melatonin biosynthesis; melatonin from serotonin: step 1/2. Catalyzes the transfer of a methyl group onto N-acetylserotonin, producing melatonin (N-acetyl-5-methoxytryptamine). The chain is Acetylserotonin O-methyltransferase (ASMT) from Gallus gallus (Chicken).